We begin with the raw amino-acid sequence, 528 residues long: O-methylsterigmatocystin oxidoreductase (528 aa).

C440 provides a ligand contact to heme.

This sequence belongs to the cytochrome P450 family. Heme serves as cofactor.

It catalyses the reaction 8-O-methylsterigmatocystin + 2 reduced [NADPH--hemoprotein reductase] + 2 O2 = aflatoxin B1 + methanol + 2 oxidized [NADPH--hemoprotein reductase] + CO2 + H2O + 2 H(+). The enzyme catalyses 8-O-methyldihydrosterigmatocystin + 2 reduced [NADPH--hemoprotein reductase] + 2 O2 = aflatoxin B2 + methanol + 2 oxidized [NADPH--hemoprotein reductase] + CO2 + H2O + 2 H(+). It functions in the pathway mycotoxin biosynthesis; aflatoxin biosynthesis. In terms of biological role, converts O-methylsterigmatocystin (OMST) to aflatoxin B1 and converts dihydro-O-methylsterigmatocystin (DHOMST) to aflatoxin B2 in the aflatoxin biosynthesis pathway. This chain is O-methylsterigmatocystin oxidoreductase (ordA), found in Aspergillus flavus.